Consider the following 93-residue polypeptide: Small ribosomal subunit protein bS16 (93 aa).

The protein belongs to the bacterial ribosomal protein bS16 family.

The polypeptide is Small ribosomal subunit protein bS16 (Opitutus terrae (strain DSM 11246 / JCM 15787 / PB90-1)).